The following is a 540-amino-acid chain: CTP synthase (540 aa).

The amidoligase domain stretch occupies residues 1-270 (MNNLTSTKFI…DTQILKHFNI (270 aa)). CTP is bound at residue S18. UTP is bound at residue S18. Residues 19–24 (SLGKGL) and D76 contribute to the ATP site. Mg(2+) is bound by residues D76 and E144. CTP is bound by residues 151–153 (DIE), 191–196 (KTKPTQ), and K227. UTP-binding positions include 191–196 (KTKPTQ) and K227. In terms of domain architecture, Glutamine amidotransferase type-1 spans 295–537 (TIAIIGKYIK…VQASLNYQET (243 aa)). G356 lines the L-glutamine pocket. Catalysis depends on C383, which acts as the Nucleophile; for glutamine hydrolysis. L-glutamine contacts are provided by residues 384–387 (MGMQ), E407, and R462. Residues H510 and E512 contribute to the active site.

It belongs to the CTP synthase family. In terms of assembly, homotetramer.

The catalysed reaction is UTP + L-glutamine + ATP + H2O = CTP + L-glutamate + ADP + phosphate + 2 H(+). It carries out the reaction L-glutamine + H2O = L-glutamate + NH4(+). The enzyme catalyses UTP + NH4(+) + ATP = CTP + ADP + phosphate + 2 H(+). It functions in the pathway pyrimidine metabolism; CTP biosynthesis via de novo pathway; CTP from UDP: step 2/2. Allosterically activated by GTP, when glutamine is the substrate; GTP has no effect on the reaction when ammonia is the substrate. The allosteric effector GTP functions by stabilizing the protein conformation that binds the tetrahedral intermediate(s) formed during glutamine hydrolysis. Inhibited by the product CTP, via allosteric rather than competitive inhibition. Catalyzes the ATP-dependent amination of UTP to CTP with either L-glutamine or ammonia as the source of nitrogen. Regulates intracellular CTP levels through interactions with the four ribonucleotide triphosphates. The protein is CTP synthase of Ehrlichia ruminantium (strain Welgevonden).